Reading from the N-terminus, the 419-residue chain is UDP-N-acetylglucosamine 1-carboxyvinyltransferase (419 aa).

Position 22–23 (22–23 (KN)) interacts with phosphoenolpyruvate. Arg93 is a binding site for UDP-N-acetyl-alpha-D-glucosamine. Cys117 serves as the catalytic Proton donor. At Cys117 the chain carries 2-(S-cysteinyl)pyruvic acid O-phosphothioketal. 2 residues coordinate UDP-N-acetyl-alpha-D-glucosamine: Asp306 and Val328.

This sequence belongs to the EPSP synthase family. MurA subfamily.

It localises to the cytoplasm. It carries out the reaction phosphoenolpyruvate + UDP-N-acetyl-alpha-D-glucosamine = UDP-N-acetyl-3-O-(1-carboxyvinyl)-alpha-D-glucosamine + phosphate. The protein operates within cell wall biogenesis; peptidoglycan biosynthesis. In terms of biological role, cell wall formation. Adds enolpyruvyl to UDP-N-acetylglucosamine. The sequence is that of UDP-N-acetylglucosamine 1-carboxyvinyltransferase from Thioalkalivibrio sulfidiphilus (strain HL-EbGR7).